Here is a 201-residue protein sequence, read N- to C-terminus: Glycerol-3-phosphate acyltransferase (201 aa).

The next 5 membrane-spanning stretches (helical) occupy residues 4–24 (LVAATLGGYLLGSVPFGLVLT), 55–75 (LATLLLDGGKGAIAVGLVWVL), 80–100 (MVPVAGFAAVLGHNFPVWLGF), 110–130 (IGTLLAAAWPVGLACIGTWLV), and 152–174 (FALYFAGPQYALMAAGLAVMGFY).

It belongs to the PlsY family. As to quaternary structure, probably interacts with PlsX.

Its subcellular location is the cell inner membrane. The catalysed reaction is an acyl phosphate + sn-glycerol 3-phosphate = a 1-acyl-sn-glycero-3-phosphate + phosphate. The protein operates within lipid metabolism; phospholipid metabolism. Functionally, catalyzes the transfer of an acyl group from acyl-phosphate (acyl-PO(4)) to glycerol-3-phosphate (G3P) to form lysophosphatidic acid (LPA). This enzyme utilizes acyl-phosphate as fatty acyl donor, but not acyl-CoA or acyl-ACP. The sequence is that of Glycerol-3-phosphate acyltransferase from Paramagnetospirillum magneticum (strain ATCC 700264 / AMB-1) (Magnetospirillum magneticum).